The sequence spans 176 residues: Large ribosomal subunit protein uL10 (176 aa).

This sequence belongs to the universal ribosomal protein uL10 family. In terms of assembly, part of the ribosomal stalk of the 50S ribosomal subunit. The N-terminus interacts with L11 and the large rRNA to form the base of the stalk. The C-terminus forms an elongated spine to which L12 dimers bind in a sequential fashion forming a multimeric L10(L12)X complex.

Its function is as follows. Forms part of the ribosomal stalk, playing a central role in the interaction of the ribosome with GTP-bound translation factors. This is Large ribosomal subunit protein uL10 from Thioalkalivibrio sulfidiphilus (strain HL-EbGR7).